The chain runs to 554 residues: MSYRDLRECIDLERGTEDVGLAAGRSQREKKRSYKDLLREEEEIAEQVRKSSKKRSKELDLFSGNELHKKKKKHSSDDYHADHSTDSAKKKKKTSLPSPSSSDTAMDLLKAITSPQADTSTTHPSKKPEKILATPISFSSPSQPPHKDYHKKSGEVSGDDSSHRSKKSKPLTLREPDGLRMKLIMSPNEKSEEEAVSPQGGPGHSDSASSKKNSKKLGREEIESRSSHKKHKKQSYTPRSGGTPDSASSTGGELDAGELVIDDSLRDMKKKKKSKKSKKKKDKHKDEKHKKHSKSKREHEVEQSQTQIASPGLPSPPPPPATTPPTSPPSIPLQPQALVTHTEEQSDKKKKKEDPEKPKKKNMSAYQVFSKEYRVSIIAEHPGIDFGELSKKLAEVWKQLPEKDKLVWKQKAQYLQHKQNKAEATTVKRKSSSSESAPKSKGSSSGLVSPNKKSPTSSVASFSTSPAKVPDTEPIDVAAHLQLLGESLSLIGHRLQETEGMVAVSGSLSVLLDSILCALGPLVCLTSHVPQLNACPKQILSNTLDNIAYVMPGL.

2 disordered regions span residues Gly15–Val368 and His417–Val469. Positions Ser75 to Ala88 are enriched in basic and acidic residues. A compositionally biased stretch (low complexity) spans Ser95–Ala105. Polar residues predominate over residues Thr113–His123. Basic and acidic residues-rich tracts occupy residues Pro145–Gly154 and Leu217–Ser226. Over residues Tyr236–Gly251 the composition is skewed to polar residues. Residues Met268–Lys296 show a composition bias toward basic residues. The span at Leu313–Pro332 shows a compositional bias: pro residues. Basic and acidic residues predominate over residues His341–Lys357. Residues Lys359–Val427 constitute a DNA-binding region (HMG box). 2 stretches are compositionally biased toward low complexity: residues Ser433 to Ser445 and Ser454 to Ala467.

As to quaternary structure, interacts with nlk.2.

The protein localises to the nucleus. Negatively regulates Wnt/beta-catenin signaling during development. The chain is HMG box-containing protein 4 (hmgxb4) from Xenopus laevis (African clawed frog).